Here is a 428-residue protein sequence, read N- to C-terminus: MPLNSYIFFLFLTTSPRNTFFGIRTHSDRIMATEHITRTGDEYNVELLPSDDDAPPLESSWRLNLDAFQLPSSTGGRHDGRTRFSRYFRTPRKERRVSEYYKKQERLLEGFNEMETIHENGFASGVPTEEEMKKLAKSERLAVHISNATNLVLFVAKVYASMESRSMAVIASTLDSLLDLLSGFILWFTANAMRKPNQFHYPIGKRRMQPVGIIVFASVMATLGLQVLLESGRQLVAKSGIHMNSTEEKWMIGIMVSVTIVKFLLMLYCRGFQNEIVRAYAQDHLFDVVTNSIGLATAVLAVKFYWWIDPTGAILIALYTIATWARTVLENVHSLIGRSAPPDFLAKLTFLIWNHHEQIKHIDTVRAYTFGSHYFVEVDIVLPEDMRLQEAHNIGETLQEKLEQLAEVERAFVHIDFEFTHRPEHKCN.

Residues 1–140 (MPLNSYIFFL…EMKKLAKSER (140 aa)) lie on the Cytoplasmic side of the membrane. The helical transmembrane segment at 141 to 161 (LAVHISNATNLVLFVAKVYAS) threads the bilayer. Residues 162–167 (MESRSM) lie on the Vacuolar side of the membrane. Residues 168 to 188 (AVIASTLDSLLDLLSGFILWF) form a helical membrane-spanning segment. Residues 189–209 (TANAMRKPNQFHYPIGKRRMQ) are Cytoplasmic-facing. The chain crosses the membrane as a helical span at residues 210–230 (PVGIIVFASVMATLGLQVLLE). At 231–248 (SGRQLVAKSGIHMNSTEE) the chain is on the vacuolar side. The helical transmembrane segment at 249 to 269 (KWMIGIMVSVTIVKFLLMLYC) threads the bilayer. The Cytoplasmic portion of the chain corresponds to 270 to 287 (RGFQNEIVRAYAQDHLFD). The chain crosses the membrane as a helical span at residues 288 to 308 (VVTNSIGLATAVLAVKFYWWI). The Vacuolar portion of the chain corresponds to 309 to 311 (DPT). The helical transmembrane segment at 312–332 (GAILIALYTIATWARTVLENV) threads the bilayer. At 333–428 (HSLIGRSAPP…FTHRPEHKCN (96 aa)) the chain is on the cytoplasmic side.

This sequence belongs to the cation diffusion facilitator (CDF) transporter (TC 2.A.4) family. SLC30A subfamily.

The protein localises to the vacuole membrane. In terms of biological role, involved in sequestration of excess metal in the cytoplasm into vacuoles to maintain metal homeostasis. This chain is Metal tolerance protein 10 (MTP10), found in Arabidopsis thaliana (Mouse-ear cress).